We begin with the raw amino-acid sequence, 658 residues long: MERQFEIVSAYSPQGDQPVAIEKLVEGINSGKKKQVLLGATGTGKTFTISNVIKEVQKPTLVMAHNKTLAGQLYSELKDFFPNNAVEYFVSYYDYYQPEAYVPQTDTFIEKDAQINDEIDKLRHSATSALFERDDVIIVASVSCIYGLGSPEEYRELVVSLRVGMEKDRNQLLRELVDVQYGRNDIDFKRGTFRVRGDVVEIFPASLDEHCIRIEFFGDEIDRIREVNALTGEVLAEREHVAIFPASHFVTREEKMKVAIENIEKELEERLKELNENGKLLEAQRIEQRTRYDLEMMREMGFCSGIENYSRHLTLRPAGATPYTLLDYFPKDFLIVMDESHVSVPQVRAMYNGDQARKQVLVDHGFRLPSALDNRPLTFDEFEEKTNQVIYVSATPGPYELEQSPEVIEQIIRPTGLLDPPIDIRPIEGQIDDLLGEIQDRIAKNERVLITTLTKKMSEDLTDYLKDVGIKVTYLHSEIKTLERIEIIRDLRLGKFDVLVGINLLREGLDIPEVSLVAILDADKEGFLRSERSLIQTIGRAARNENGRVIMYADRITKSMGIAIEETKRRRSIQEAYNEEHGITPKTIQKGVRDVIRATTAAEEIETYEATPAKKMTKKEREKTIAKMEAEMKEAAKALDFERAAELRDLLLELKAEG.

The region spanning Glu-26 to Arg-413 is the Helicase ATP-binding domain. An ATP-binding site is contributed by Gly-39–Thr-46. A Beta-hairpin motif is present at residues Tyr-92 to Ile-115. The Helicase C-terminal domain occupies Gln-430–Ile-596. The UVR domain occupies Glu-622–Glu-657.

It belongs to the UvrB family. Forms a heterotetramer with UvrA during the search for lesions. Interacts with UvrC in an incision complex.

It localises to the cytoplasm. The UvrABC repair system catalyzes the recognition and processing of DNA lesions. A damage recognition complex composed of 2 UvrA and 2 UvrB subunits scans DNA for abnormalities. Upon binding of the UvrA(2)B(2) complex to a putative damaged site, the DNA wraps around one UvrB monomer. DNA wrap is dependent on ATP binding by UvrB and probably causes local melting of the DNA helix, facilitating insertion of UvrB beta-hairpin between the DNA strands. Then UvrB probes one DNA strand for the presence of a lesion. If a lesion is found the UvrA subunits dissociate and the UvrB-DNA preincision complex is formed. This complex is subsequently bound by UvrC and the second UvrB is released. If no lesion is found, the DNA wraps around the other UvrB subunit that will check the other stand for damage. This chain is UvrABC system protein B, found in Bacillus cereus (strain ATCC 14579 / DSM 31 / CCUG 7414 / JCM 2152 / NBRC 15305 / NCIMB 9373 / NCTC 2599 / NRRL B-3711).